Here is a 683-residue protein sequence, read N- to C-terminus: Stromal interaction molecule 1 (683 aa).

Positions 1-22 are cleaved as a signal peptide; sequence MDVCARLALWLLWGLLLHHGQS. Residues 23 to 211 are Extracellular-facing; the sequence is LSQSHSEKAT…LLTRHNHLKD (189 aa). EF-hand domains follow at residues 62 to 95 and 100 to 124; these read SFDA…EDLN and TVKH…AWKS. Ca(2+) contacts are provided by Asp74, Asp76, Asn78, Asp80, and Glu85. Residues Asn129 and Asn169 are each glycosylated (N-linked (GlcNAc...) asparagine). The SAM domain maps to 130-198; the sequence is WTVDEVVQWL…QLKALDTVLF (69 aa). The chain crosses the membrane as a helical span at residues 212–232; that stretch reads FMLVVSIVIGVGGCWFAYIQN. Residues 233 to 683 are Cytoplasmic-facing; the sequence is RYSKEHMKKM…LKIFKKPLKK (451 aa). Residues 246-440 adopt a coiled-coil conformation; it reads LEGLHRAEQS…IEILCGFQIV (195 aa). Phosphoserine is present on Ser255. Residues 342-440 are SOAR/CAD; the sequence is PEALQKWLQL…IEILCGFQIV (99 aa). Positions 473–481 are contributes to fast Ca(2+)-dependent inactivation of CRAC channels; that stretch reads DDVDDMDEE. The segment covering 488-497 has biased composition (low complexity); it reads MQSPSLQSSV. Residues 488 to 535 form a disordered region; it reads MQSPSLQSSVRQRLTEPQHGLGSQRDLTHSDSESSLHMSDRQRLAPKP. Position 502 is a phosphothreonine (Thr502). Position 510 is a phosphoserine (Ser510). Basic and acidic residues predominate over residues 513–530; it reads DLTHSDSESSLHMSDRQR. A Phosphothreonine modification is found at Thr515. Residues Ser517, Ser519, Ser521, Ser522, Ser565, Ser573, Ser606, Ser616, and Ser626 each carry the phosphoserine modification. The tract at residues 597 to 683 is disordered; it reads LSSPALPSGS…LKIFKKPLKK (87 aa). Residues 640–643 carry the Microtubule tip localization signal motif; the sequence is TRIP. Acidic residues predominate over residues 653-664; that stretch reads EEDNGSIGEETD. Residue Ser658 is modified to Phosphoserine. Thr663 is subject to Phosphothreonine. The residue at position 666 (Ser666) is a Phosphoserine. The segment covering 668–683 has biased composition (basic residues); it reads GRKKFPLKIFKKPLKK. Residues 670–683 form a required for generation of inwardly rectifying CRAC currents region; the sequence is KKFPLKIFKKPLKK.

In terms of assembly, monomer in the presence of Ca(2+). It oligomerizes in absence of Ca(2+). Forms homooligomers and heterooligomers with STIM2. Interacts with pore-forming subunits of CRAC channels, ORAI1, ORAI2 and ORAI3; this interaction is potentiated upon Ca(2+) store depletion. Interacts (via the transmembrane region and the SOAR/CAD domain) with SPPL3; the interaction promotes the binding of STIM1 to ORAI1. Interacts with ORAI1. Interacts with MAPRE1; probably required for targeting to the growing microtubule plus ends. Interacts with CRACR2A/EFCAB4B; the interaction is direct and takes place in absence of Ca(2+). Forms a complex with CRACR2A/EFCAB4B and ORAI1 at low concentration of Ca(2+), the complex dissociates at elevated Ca(2+) concentrations. Interacts with SARAF, promoting a slow inactivation of STIM1-dependent SOCE activity, possibly by facilitating the deoligomerization of STIM1. Interacts with EFHB; the interaction takes place upon Ca(2+)-store depletion and inhibits the association with SARAF. Interacts with ASPH. Interacts with SLC35G1; intracellular Ca(2+)-dependent. May interact with ATP1A1, ATP2A2, ATP2B1, ATP2B4, KPNB1 and XPO1; through SLC35G1. Interacts with TMEM203. Interacts with STIMATE, promoting STIM1 conformational switch. Interacts with TMEM178A. Interacts with CASQ1 (via C-terminal end and preferentially with the monomeric form); this interaction increases in response to a depletion of intracellular calcium, decreases both STIM1 aggregation and clustering, interaction of STIM1 with ORAI1 and store-operated Ca(2+) entry (SOCE) activity. Post-translationally, glycosylation is required for cell surface expression. Phosphorylated predominantly on Ser residues.

The protein localises to the cell membrane. It is found in the endoplasmic reticulum membrane. It localises to the sarcoplasmic reticulum. Its subcellular location is the cytoplasm. The protein resides in the cytoskeleton. Its function is as follows. Acts as a Ca(2+) sensor that gates two major inward rectifying Ca(2+) channels at the plasma membrane: Ca(2+) release-activated Ca(2+) (CRAC) channels and arachidonate-regulated Ca(2+)-selective (ARC) channels. Plays a role in mediating store-operated Ca(2+) entry (SOCE), a Ca(2+) influx following depletion of intracellular Ca(2+) stores. Upon Ca(2+) depletion, translocates from the endoplasmic reticulum to the plasma membrane where it activates CRAC channel pore-forming subunits ORA1, ORA2 and ORAI3 to generate sustained and oscillatory Ca(2+) entry. Involved in enamel formation. This Bos taurus (Bovine) protein is Stromal interaction molecule 1 (STIM1).